The following is a 190-amino-acid chain: MINHFKPALLMLLVWTLITGVFYPVLVTHLGQLLFPRQANGSLIEKDGKVLGSELIGQPFGDPRYFWGRPSATAPHAYNAGASSGSNQGPTNPALLAAIKSRVQALRNADPGNTAPVPVDLVTASGSGLDPHISPAAAAYQAARVARLRNLSLPVVEDLVKRYTEGRQFGFLGEPRVNVLKLNLALDALR.

A helical transmembrane segment spans residues 7-27; the sequence is PALLMLLVWTLITGVFYPVLV.

This sequence belongs to the KdpC family. In terms of assembly, the system is composed of three essential subunits: KdpA, KdpB and KdpC.

It is found in the cell inner membrane. Functionally, part of the high-affinity ATP-driven potassium transport (or Kdp) system, which catalyzes the hydrolysis of ATP coupled with the electrogenic transport of potassium into the cytoplasm. This subunit acts as a catalytic chaperone that increases the ATP-binding affinity of the ATP-hydrolyzing subunit KdpB by the formation of a transient KdpB/KdpC/ATP ternary complex. The polypeptide is Potassium-transporting ATPase KdpC subunit (Methylococcus capsulatus (strain ATCC 33009 / NCIMB 11132 / Bath)).